The primary structure comprises 438 residues: Asparagine--tRNA ligase (438 aa).

Belongs to the class-II aminoacyl-tRNA synthetase family. Homodimer.

It localises to the cytoplasm. The catalysed reaction is tRNA(Asn) + L-asparagine + ATP = L-asparaginyl-tRNA(Asn) + AMP + diphosphate + H(+). The chain is Asparagine--tRNA ligase from Thermus thermophilus (strain ATCC 27634 / DSM 579 / HB8).